A 332-amino-acid polypeptide reads, in one-letter code: Leucine carboxyl methyltransferase 1 (332 aa).

The segment at 1–23 is disordered; that stretch reads MAASLRRPSFTTCSSPTDTDDEG. S-adenosyl-L-methionine-binding positions include R71, G96, D120, 169–170, and E196; that span reads DL.

This sequence belongs to the methyltransferase superfamily. LCMT family.

The catalysed reaction is [phosphatase 2A protein]-C-terminal L-leucine + S-adenosyl-L-methionine = [phosphatase 2A protein]-C-terminal L-leucine methyl ester + S-adenosyl-L-homocysteine. Methylates the carboxyl group of the C-terminal leucine residue of protein phosphatase 2A catalytic subunits to form alpha-leucine ester residues. In Bos taurus (Bovine), this protein is Leucine carboxyl methyltransferase 1 (LCMT1).